Consider the following 118-residue polypeptide: Large ribosomal subunit protein bL19 (118 aa).

This sequence belongs to the bacterial ribosomal protein bL19 family.

Functionally, this protein is located at the 30S-50S ribosomal subunit interface and may play a role in the structure and function of the aminoacyl-tRNA binding site. This is Large ribosomal subunit protein bL19 (rplS) from Serratia marcescens.